The primary structure comprises 174 residues: Alpha-crystallin B chain (174 aa).

The residue at position 1 (methionine 1) is an N-acetylmethionine. Residues 55–163 (RMPSWLETGL…PERSIPITRE (109 aa)) enclose the sHSP domain. Zn(2+)-binding residues include histidine 82, histidine 103, glutamate 105, and histidine 110. Residues 148–174 (RKQSDVPERSIPITREEKPAIAGAQRK) form a disordered region. Over residues 149 to 166 (KQSDVPERSIPITREEKP) the composition is skewed to basic and acidic residues.

Belongs to the small heat shock protein (HSP20) family. As to quaternary structure, heteromer composed of three CRYAA and one CRYAB subunits. Aggregates with homologous proteins, including the small heat shock protein HSPB1, to form large heteromeric complexes. Inter-subunit bridging via zinc ions enhances stability, which is crucial as there is no protein turn over in the lens. Lens as well as other tissues.

Its function is as follows. May contribute to the transparency and refractive index of the lens. In Anas platyrhynchos (Mallard), this protein is Alpha-crystallin B chain (CRYAB).